The primary structure comprises 335 residues: Cytoplasmic envelopment protein 2 (335 aa).

This sequence belongs to the herpesviridae cytoplasmic envelopment protein 2 family. In terms of assembly, interacts with cytoplasmic envelopment protein 3 and with the capsid.

It localises to the virion tegument. Its subcellular location is the host cytoplasm. The protein resides in the host nucleus. Plays a critical role in cytoplasmic virus egress. Participates in the final step of tegumentation and envelope acquisition within the host cytoplasm by directly interacting with the capsid. Upon virion binding to target cell, a signaling cascade is triggered to disrupt the interaction with the capsid, thereby preparing capsid uncoating. This chain is Cytoplasmic envelopment protein 2 (U65), found in Human herpesvirus 6B (strain Z29) (HHV-6 variant B).